Consider the following 430-residue polypeptide: UDP-N-acetylglucosamine 1-carboxyvinyltransferase (430 aa).

22-23 (KN) is a binding site for phosphoenolpyruvate. Arg-102 serves as a coordination point for UDP-N-acetyl-alpha-D-glucosamine. Cys-126 serves as the catalytic Proton donor. Position 126 is a 2-(S-cysteinyl)pyruvic acid O-phosphothioketal (Cys-126). Residues 131–135 (RPVDL), 172–175 (KVSV), Asp-317, and Ile-339 contribute to the UDP-N-acetyl-alpha-D-glucosamine site.

This sequence belongs to the EPSP synthase family. MurA subfamily.

The protein resides in the cytoplasm. It catalyses the reaction phosphoenolpyruvate + UDP-N-acetyl-alpha-D-glucosamine = UDP-N-acetyl-3-O-(1-carboxyvinyl)-alpha-D-glucosamine + phosphate. It functions in the pathway cell wall biogenesis; peptidoglycan biosynthesis. Cell wall formation. Adds enolpyruvyl to UDP-N-acetylglucosamine. The protein is UDP-N-acetylglucosamine 1-carboxyvinyltransferase of Sinorhizobium medicae (strain WSM419) (Ensifer medicae).